The following is a 370-amino-acid chain: MEILRVEPTPSPNTMKIVLSNKREDNKSNTFTYIEEQQPQFINDLLAIDGVKSIFYVMDFLAIDKEPKSDWEVVLPQITSTLNNESFIDSSHKPDEHYGEIKAEALMFKGIPYQIKLTTTSDESRKQLPDYFVESMLKAQKDGDNVVFLRKWQDLGVRYGDLEEVMNEVYEEIIALYPSEKLASLVQTALETDIVIPQQQYHHVTLNEYKEATDWKDKLRMLKEFPTPTLQDIDLLDEALQEDKAPLRRQAIVLIGMIEEKEILPYLYKGLRDKNPAVRRTAGDCLSDLGFKEALPEMENALNDPQKIVRWRAAMFLFDEGGPEQLPSLKSHANDPAYEVKLQIEMAISRIENGDEALGSVWKQIANRNK.

This sequence belongs to the CvfC family.

The polypeptide is Conserved virulence factor C (cvfC) (Staphylococcus haemolyticus (strain JCSC1435)).